Reading from the N-terminus, the 467-residue chain is 3-isopropylmalate dehydratase large subunit (467 aa).

Positions 349, 409, and 412 each coordinate [4Fe-4S] cluster.

This sequence belongs to the aconitase/IPM isomerase family. LeuC type 1 subfamily. Heterodimer of LeuC and LeuD. Requires [4Fe-4S] cluster as cofactor.

It catalyses the reaction (2R,3S)-3-isopropylmalate = (2S)-2-isopropylmalate. Its pathway is amino-acid biosynthesis; L-leucine biosynthesis; L-leucine from 3-methyl-2-oxobutanoate: step 2/4. Functionally, catalyzes the isomerization between 2-isopropylmalate and 3-isopropylmalate, via the formation of 2-isopropylmaleate. This is 3-isopropylmalate dehydratase large subunit from Vibrio cholerae serotype O1 (strain ATCC 39541 / Classical Ogawa 395 / O395).